A 245-amino-acid chain; its full sequence is MEPSGLRTPCSLLALVLLSALVLTPTLAIEVYTDREVYGTAGSRVTLSCSFWSSEWISDDISVTWHYQPDHSREMYSIVHFAKGLSSIDAGIFKDRIEWVGSPKWKDASIVVHNLELTDNGTFTCDVKNPPDVVGKSSYVHLQVQEKGPARAGLILGIIIAVALALVIVVTILILLIRYCWLRRKARVQRELSALERGKLHKAKDSSKRSSRQTPILYAMLDQTRGKSSEKKAKGGIGDSRKDRK.

The N-terminal stretch at 1 to 28 (MEPSGLRTPCSLLALVLLSALVLTPTLA) is a signal peptide. The region spanning 29–143 (IEVYTDREVY…VGKSSYVHLQ (115 aa)) is the Ig-like V-type domain. At 29–153 (IEVYTDREVY…VQEKGPARAG (125 aa)) the chain is on the extracellular side. A disulfide bridge links Cys-49 with Cys-125. A glycan (N-linked (GlcNAc...) asparagine) is linked at Asn-120. Residues 154 to 174 (LILGIIIAVALALVIVVTILI) traverse the membrane as a helical segment. Over 175–245 (LLIRYCWLRR…GIGDSRKDRK (71 aa)) the chain is Cytoplasmic. 2 stretches are compositionally biased toward basic and acidic residues: residues 199–208 (KLHKAKDSSK) and 224–245 (TRGKSSEKKAKGGIGDSRKDRK). The tract at residues 199 to 245 (KLHKAKDSSKRSSRQTPILYAMLDQTRGKSSEKKAKGGIGDSRKDRK) is disordered.

This sequence belongs to the myelin P0 protein family.

The protein resides in the cell membrane. Its function is as follows. Creation of an extracellular membrane face which guides the wrapping process and ultimately compacts adjacent lamellae. The sequence is that of Myelin protein P0 (mpz) from Xenopus laevis (African clawed frog).